The chain runs to 547 residues: Isoflavonoid 7-O-beta-apiosyl-glucoside beta-glycosidase (547 aa).

The first 31 residues, 1 to 31, serve as a signal peptide directing secretion; that stretch reads MHAMTFKAILLLGLLALVSTSASIAFAKEVR. Gln-59 is an a beta-D-glucoside binding site. Residues Asn-72 and Asn-132 are each glycosylated (N-linked (GlcNAc...) asparagine). His-159 serves as a coordination point for a beta-D-glucoside. The N-linked (GlcNAc...) asparagine glycan is linked to Asn-175. 204–205 is a binding site for a beta-D-glucoside; it reads NE. Glu-205 (proton donor) is an active-site residue. Cys-224 and Cys-232 are joined by a disulfide. The N-linked (GlcNAc...) asparagine glycan is linked to Asn-285. Residues Tyr-348, Glu-419, Trp-468, 475–476, and Phe-484 each bind a beta-D-glucoside; that span reads EW. The Nucleophile role is filled by Glu-419. N-linked (GlcNAc...) asparagine glycosylation is present at Asn-490.

It belongs to the glycosyl hydrolase 1 family. Homotetramer.

It catalyses the reaction 7-[beta-D-apiofuranosyl-(1-&gt;6)-beta-D-glucopyranosyloxy]isoflavonoid + H2O = a 7-hydroxyisoflavonoid + beta-D-apiofuranosyl-(1-&gt;6)-D-glucose.. With respect to regulation, not inhibited by iron, calcium, mercury, manganese, zinc or EDTA. Functionally, hydrolyzes dalpatein 7-O-beta-D-apiofuranosyl-(1-&gt;6)-beta-D-glucopyranoside and dalnigrein 7-O-beta-D-apiofuranosyl-(1-&gt;6)-beta-D-glucopyranoside. Also has activity towards pNP-beta-D-fucoside and pNP-beta-D-glucoside, but not pNP-beta-cellobioside. This is Isoflavonoid 7-O-beta-apiosyl-glucoside beta-glycosidase from Dalbergia nigrescens (Thai blackwood).